We begin with the raw amino-acid sequence, 1013 residues long: Mediator of RNA polymerase II transcription subunit 5 (1013 aa).

Belongs to the Mediator complex subunit 5 family. In terms of assembly, component of the Mediator complex.

Its subcellular location is the nucleus. In terms of biological role, component of the Mediator complex, a coactivator involved in the regulated transcription of nearly all RNA polymerase II-dependent genes. Mediator functions as a bridge to convey information from gene-specific regulatory proteins to the basal RNA polymerase II transcription machinery. Mediator is recruited to promoters by direct interactions with regulatory proteins and serves as a scaffold for the assembly of a functional preinitiation complex with RNA polymerase II and the general transcription factors. The polypeptide is Mediator of RNA polymerase II transcription subunit 5 (NUT1) (Aspergillus oryzae (strain ATCC 42149 / RIB 40) (Yellow koji mold)).